A 354-amino-acid polypeptide reads, in one-letter code: Cytoplasmic tRNA 2-thiolation protein 1 (354 aa).

The protein belongs to the TtcA family. CTU1/NCS6/ATPBD3 subfamily.

The protein resides in the cytoplasm. It functions in the pathway tRNA modification; 5-methoxycarbonylmethyl-2-thiouridine-tRNA biosynthesis. Plays a central role in 2-thiolation of mcm(5)S(2)U at tRNA wobble positions of tRNA(Lys), tRNA(Glu) and tRNA(Gln). Directly binds tRNAs and probably acts by catalyzing adenylation of tRNAs, an intermediate required for 2-thiolation. It is unclear whether it acts as a sulfurtransferase that transfers sulfur from thiocarboxylated URM1 onto the uridine of tRNAs at wobble position. Prior mcm(5) tRNA modification by the elongator complex is required for 2-thiolation. May also be involved in protein urmylation. This Laccaria bicolor (strain S238N-H82 / ATCC MYA-4686) (Bicoloured deceiver) protein is Cytoplasmic tRNA 2-thiolation protein 1.